The chain runs to 559 residues: NAD-dependent malic enzyme 2 (559 aa).

Tyr98 serves as the catalytic Proton donor. An NAD(+)-binding site is contributed by Arg151. Lys169 (proton acceptor) is an active-site residue. Glu240, Asp241, and Asp264 together coordinate a divalent metal cation. Asp264 and Asn413 together coordinate NAD(+).

This sequence belongs to the malic enzymes family. Homotetramer. The cofactor is Mg(2+). Requires Mn(2+) as cofactor.

The enzyme catalyses (S)-malate + NAD(+) = pyruvate + CO2 + NADH. The catalysed reaction is oxaloacetate + H(+) = pyruvate + CO2. This chain is NAD-dependent malic enzyme 2, found in Vibrio vulnificus (strain YJ016).